The chain runs to 231 residues: Ribosomal RNA small subunit methyltransferase G (231 aa).

Residues glycine 92, leucine 97, 143–144, and arginine 162 contribute to the S-adenosyl-L-methionine site; that span reads VE.

Belongs to the methyltransferase superfamily. RNA methyltransferase RsmG family.

It is found in the cytoplasm. It carries out the reaction guanosine(527) in 16S rRNA + S-adenosyl-L-methionine = N(7)-methylguanosine(527) in 16S rRNA + S-adenosyl-L-homocysteine. In terms of biological role, specifically methylates the N7 position of guanine in position 527 of 16S rRNA. The chain is Ribosomal RNA small subunit methyltransferase G from Burkholderia thailandensis (strain ATCC 700388 / DSM 13276 / CCUG 48851 / CIP 106301 / E264).